Consider the following 166-residue polypeptide: Large ribosomal subunit protein uL10 (166 aa).

This sequence belongs to the universal ribosomal protein uL10 family. Part of the ribosomal stalk of the 50S ribosomal subunit. The N-terminus interacts with L11 and the large rRNA to form the base of the stalk. The C-terminus forms an elongated spine to which L12 dimers bind in a sequential fashion forming a multimeric L10(L12)X complex.

In terms of biological role, forms part of the ribosomal stalk, playing a central role in the interaction of the ribosome with GTP-bound translation factors. The protein is Large ribosomal subunit protein uL10 of Lactobacillus johnsonii (strain CNCM I-12250 / La1 / NCC 533).